We begin with the raw amino-acid sequence, 60 residues long: Large ribosomal subunit protein bL32 (60 aa).

It belongs to the bacterial ribosomal protein bL32 family.

The polypeptide is Large ribosomal subunit protein bL32 (Streptococcus equi subsp. zooepidemicus (strain MGCS10565)).